The following is an 89-amino-acid chain: Small ribosomal subunit protein uS15 (89 aa).

Belongs to the universal ribosomal protein uS15 family. In terms of assembly, part of the 30S ribosomal subunit. Forms a bridge to the 50S subunit in the 70S ribosome, contacting the 23S rRNA.

One of the primary rRNA binding proteins, it binds directly to 16S rRNA where it helps nucleate assembly of the platform of the 30S subunit by binding and bridging several RNA helices of the 16S rRNA. In terms of biological role, forms an intersubunit bridge (bridge B4) with the 23S rRNA of the 50S subunit in the ribosome. This is Small ribosomal subunit protein uS15 from Acidothermus cellulolyticus (strain ATCC 43068 / DSM 8971 / 11B).